A 440-amino-acid polypeptide reads, in one-letter code: Adenylosuccinate lyase (440 aa).

N(6)-(1,2-dicarboxyethyl)-AMP is bound by residues 4 to 5 (RY), 67 to 69 (KHD), and 93 to 94 (TS). H141 acts as the Proton donor/acceptor in catalysis. N(6)-(1,2-dicarboxyethyl)-AMP is bound at residue Q212. S262 (proton donor/acceptor) is an active-site residue. N(6)-(1,2-dicarboxyethyl)-AMP is bound by residues S263, 268–270 (KRN), N276, and 307–311 (SVERF).

Belongs to the lyase 1 family. Adenylosuccinate lyase subfamily. As to quaternary structure, homotetramer. Residues from neighboring subunits contribute catalytic and substrate-binding residues to each active site.

The enzyme catalyses N(6)-(1,2-dicarboxyethyl)-AMP = fumarate + AMP. The catalysed reaction is (2S)-2-[5-amino-1-(5-phospho-beta-D-ribosyl)imidazole-4-carboxamido]succinate = 5-amino-1-(5-phospho-beta-D-ribosyl)imidazole-4-carboxamide + fumarate. It participates in purine metabolism; AMP biosynthesis via de novo pathway; AMP from IMP: step 2/2. Its pathway is purine metabolism; IMP biosynthesis via de novo pathway; 5-amino-1-(5-phospho-D-ribosyl)imidazole-4-carboxamide from 5-amino-1-(5-phospho-D-ribosyl)imidazole-4-carboxylate: step 2/2. Functionally, catalyzes two reactions in de novo purine nucleotide biosynthesis. Catalyzes the breakdown of 5-aminoimidazole- (N-succinylocarboxamide) ribotide (SAICAR or 2-[5-amino-1-(5-phospho-beta-D-ribosyl)imidazole-4-carboxamido]succinate) to 5-aminoimidazole-4-carboxamide ribotide (AICAR or 5-amino-1-(5-phospho-beta-D-ribosyl)imidazole-4-carboxamide) and fumarate, and of adenylosuccinate (ADS or N(6)-(1,2-dicarboxyethyl)-AMP) to adenosine monophosphate (AMP) and fumarate. The protein is Adenylosuccinate lyase (purB) of Helicobacter pylori (strain ATCC 700392 / 26695) (Campylobacter pylori).